A 785-amino-acid polypeptide reads, in one-letter code: Endonuclease MutS2 (785 aa).

335–342 (GPNTGGKT) is an ATP binding site. Residues 710 to 785 (LDLRGERYEE…GLGNTVVELR (76 aa)) enclose the Smr domain. A disordered region spans residues 764–785 (VKSARDGGANEGGLGNTVVELR).

The protein belongs to the DNA mismatch repair MutS family. MutS2 subfamily. In terms of assembly, homodimer. Binds to stalled ribosomes, contacting rRNA.

Its function is as follows. Endonuclease that is involved in the suppression of homologous recombination and thus may have a key role in the control of bacterial genetic diversity. In terms of biological role, acts as a ribosome collision sensor, splitting the ribosome into its 2 subunits. Detects stalled/collided 70S ribosomes which it binds and splits by an ATP-hydrolysis driven conformational change. Acts upstream of the ribosome quality control system (RQC), a ribosome-associated complex that mediates the extraction of incompletely synthesized nascent chains from stalled ribosomes and their subsequent degradation. Probably generates substrates for RQC. This chain is Endonuclease MutS2, found in Halalkalibacterium halodurans (strain ATCC BAA-125 / DSM 18197 / FERM 7344 / JCM 9153 / C-125) (Bacillus halodurans).